The sequence spans 408 residues: MKNQLIDRLTRYTTIDTQSDPKSTTTPSTEKQWDLLHLLEKELQQLGLPTDLDENGYLFATLESNIDVDVPTVGFLAHVDTSPDFNASNVKPQIIENYDGKPYKLGNTKRVLDPKVFPELNSLVGHTLMVTDGTSLLGADDKAGIVEIMEAICYLQEHPEIKHGTIRIGFTPDEEIGRGPHKFDVDRFNADFAYTMDGSQYGELQYESFNAAEAVITCHGVNVHPGSAKNAMVNAIRLGEQFDSLLPDSEVPERTEGYEGFYHLMNFEGTVEKATLQYIIRDHDKKQFELRKKRILEIRDDINAHFENYPVKVDISDQYFNMAEKILPLPHIIDIPKRVFAKLDIPANTEPIRGGTDGSQLSFMGLPTPNIFTGCGNFHGPYEYASIDVMEKAVQVIIGIVEDIAENH.

A disordered region spans residues 1–28 (MKNQLIDRLTRYTTIDTQSDPKSTTTPS). Residues 11–28 (RYTTIDTQSDPKSTTTPS) show a composition bias toward polar residues. Position 78 (histidine 78) interacts with Zn(2+). The active site involves aspartate 80. Residue aspartate 140 coordinates Zn(2+). The Proton acceptor role is filled by glutamate 174. Zn(2+) is bound by residues glutamate 175, aspartate 197, and histidine 379.

This sequence belongs to the peptidase M20B family. It depends on Zn(2+) as a cofactor.

Its subcellular location is the cytoplasm. It catalyses the reaction Release of the N-terminal residue from a tripeptide.. In terms of biological role, cleaves the N-terminal amino acid of tripeptides. This is Peptidase T from Staphylococcus aureus (strain USA300 / TCH1516).